The chain runs to 401 residues: All trans-polyprenyl-diphosphate synthase PDSS2 (401 aa).

Belongs to the FPP/GGPP synthase family. In terms of assembly, heterotetramer composed of 2 PDSS1/DPS1 and 2 PDSS2/DLP1 subunits.

It is found in the mitochondrion. It carries out the reaction 7 isopentenyl diphosphate + (2E,6E)-farnesyl diphosphate = all-trans-decaprenyl diphosphate + 7 diphosphate. The enzyme catalyses 6 isopentenyl diphosphate + (2E,6E)-farnesyl diphosphate = all-trans-nonaprenyl diphosphate + 6 diphosphate. It functions in the pathway cofactor biosynthesis; ubiquinone biosynthesis. Its function is as follows. Heterotetrameric enzyme that catalyzes the condensation of farnesyl diphosphate (FPP), which acts as a primer, and isopentenyl diphosphate (IPP) to produce prenyl diphosphates of varying chain lengths and participates in the determination of the side chain of ubiquinone. Supplies nona and decaprenyl diphosphate, the precursors for the side chain of the isoprenoid quinones ubiquinone-9 (Q9) and ubiquinone-10 (Q10) respectively. The enzyme adds isopentenyl diphosphate molecules sequentially to farnesyl diphosphate with trans stereochemistry. May play a role during cerebellar development. May regulate mitochondrial respiratory chain function. The polypeptide is All trans-polyprenyl-diphosphate synthase PDSS2 (Mus musculus (Mouse)).